Consider the following 1008-residue polypeptide: RNA cytidine acetyltransferase (1008 aa).

ATP-binding positions include 282-291 (GRGKSAALGL) and arginine 443. Residues 531-713 (CLLGPVQRMD…VPVYLSQKSN (183 aa)) enclose the N-acetyltransferase domain. Acetyl-CoA contacts are provided by residues 601–603 (VAT), 608–614 (QRMGYGK), and asparagine 700. At serine 907 the chain carries Phosphoserine. Positions 950-1008 (ALETNGTGGGSGLLSVKSGVKRLDGPIETREDGDLAAPLSKKKKKNNPKQRRSQGKSLI) are disordered. A compositionally biased stretch (basic and acidic residues) spans 970–982 (KRLDGPIETREDG). Basic residues predominate over residues 989 to 1008 (SKKKKKNNPKQRRSQGKSLI).

This sequence belongs to the RNA cytidine acetyltransferase family. NAT10 subfamily. In terms of assembly, component of the PRC1 complex (PSC, PC, PH and dRING1) in 0-12 hours Drosophila embryos. This complex is distinct from the Esc/E(z) complex, which contains many other PcG proteins like Esc, E(z), Su(z)12, HDAC1/Rpd3, Caf1-55 and probably Pho. The two complexes however cooperate and interact together during the first 3 hours of development to establish PcG silencing. Part of the small subunit (SSU) processome, composed of more than 70 proteins and the RNA chaperone small nucleolar RNA (snoRNA) U3.

It localises to the nucleus. Its subcellular location is the nucleolus. It catalyses the reaction a cytidine in 18S rRNA + acetyl-CoA + ATP + H2O = an N(4)-acetylcytidine in 18S rRNA + ADP + phosphate + CoA + H(+). The catalysed reaction is a cytidine in tRNA + acetyl-CoA + ATP + H2O = an N(4)-acetylcytidine in tRNA + ADP + phosphate + CoA + H(+). Functionally, RNA cytidine acetyltransferase with specificity toward both 18S rRNA and tRNAs. Catalyzes the formation of N(4)-acetylcytidine (ac4C) in 18S rRNA. Required for early nucleolar cleavages of precursor rRNA at sites A0, A1 and A2 during 18S rRNA synthesis. Catalyzes the formation of ac4C in serine and leucine tRNAs. Requires a tRNA-binding adapter protein for full tRNA acetyltransferase activity but not for 18S rRNA acetylation. Polycomb group (PcG) protein. PcG proteins act by forming multiprotein complexes, which are required to maintain the transcriptionally repressive state of homeotic genes throughout development. PcG proteins are not required to initiate repression, but to maintain it during later stages of development. They probably act via the methylation of histones, rendering chromatin heritably changed in its expressibility. Part of the small subunit (SSU) processome, first precursor of the small eukaryotic ribosomal subunit. During the assembly of the SSU processome in the nucleolus, many ribosome biogenesis factors, an RNA chaperone and ribosomal proteins associate with the nascent pre-rRNA and work in concert to generate RNA folding, modifications, rearrangements and cleavage as well as targeted degradation of pre-ribosomal RNA by the RNA exosome. In Drosophila melanogaster (Fruit fly), this protein is RNA cytidine acetyltransferase (l(1)G0020).